We begin with the raw amino-acid sequence, 431 residues long: C4-dicarboxylate transport protein (431 aa).

8 helical membrane-spanning segments follow: residues 8 to 28, 44 to 64, 78 to 98, 148 to 168, 188 to 208, 222 to 242, 307 to 327, and 355 to 375; these read ILYVQVLFAIFVGILLGHFWP, LIKMIIGPIIFCTVVTGIAGM, LLYFEIVSTFALLIGLGAAHL, GDILQILLVSLFFGAALAAIG, IVHVITKVAPIGAFGAMAFTI, LIGTFYFTAIVFVVFVLGAIA, IYMTMAVIFIAQATGIELTLL, and AATLAVVPTIPVAGMVLILGI.

This sequence belongs to the dicarboxylate/amino acid:cation symporter (DAACS) (TC 2.A.23) family.

Its subcellular location is the cell inner membrane. In terms of biological role, responsible for the transport of dicarboxylates such as succinate, fumarate, and malate from the periplasm across the membrane. This chain is C4-dicarboxylate transport protein, found in Cupriavidus pinatubonensis (strain JMP 134 / LMG 1197) (Cupriavidus necator (strain JMP 134)).